The primary structure comprises 233 residues: 2-C-methyl-D-erythritol 4-phosphate cytidylyltransferase (233 aa).

It belongs to the IspD/TarI cytidylyltransferase family. IspD subfamily.

It catalyses the reaction 2-C-methyl-D-erythritol 4-phosphate + CTP + H(+) = 4-CDP-2-C-methyl-D-erythritol + diphosphate. The protein operates within isoprenoid biosynthesis; isopentenyl diphosphate biosynthesis via DXP pathway; isopentenyl diphosphate from 1-deoxy-D-xylulose 5-phosphate: step 2/6. Functionally, catalyzes the formation of 4-diphosphocytidyl-2-C-methyl-D-erythritol from CTP and 2-C-methyl-D-erythritol 4-phosphate (MEP). This Lachnoclostridium phytofermentans (strain ATCC 700394 / DSM 18823 / ISDg) (Clostridium phytofermentans) protein is 2-C-methyl-D-erythritol 4-phosphate cytidylyltransferase.